A 333-amino-acid polypeptide reads, in one-letter code: MIIKQLPLTDLHRHLDGNIRIETILDLGQKFGLDLPAYDIEALRPHVQIVEAEPSLVAFLSKLDWGVAVLGDLDACRRVAYENVQDAMNAQIDYAELRFSPYYMAMKHNLPIAGVVEAVVDGVEAGCRDFGIKANLIGIMSRTFGQDACQQELDGLLTQKNKLVAIDLAGDELGQPGDLFVNHFKQVKDADLRVTVHAGEAAGAASMWQAINELGAVRIGHGVKAIEDPKLMEYLAKNNIGIESCLTSNIQTSTVASFESHPIKTFLEYGVKACLNTDDPAVEGIELPHEYEVAAPKVGLTPEQLKQIQINGLDLAFLSDSEKQALRDIAAKR.

Residues His-12 and His-14 each contribute to the Zn(2+) site. Positions 14, 16, and 170 each coordinate substrate. His-197 contributes to the Zn(2+) binding site. Glu-200 serves as the catalytic Proton donor. Residue Asp-278 participates in Zn(2+) binding. Asp-279 provides a ligand contact to substrate.

The protein belongs to the metallo-dependent hydrolases superfamily. Adenosine and AMP deaminases family. Adenosine deaminase subfamily. Requires Zn(2+) as cofactor.

The enzyme catalyses adenosine + H2O + H(+) = inosine + NH4(+). It carries out the reaction 2'-deoxyadenosine + H2O + H(+) = 2'-deoxyinosine + NH4(+). Catalyzes the hydrolytic deamination of adenosine and 2-deoxyadenosine. This is Adenosine deaminase from Aliivibrio fischeri (strain MJ11) (Vibrio fischeri).